The sequence spans 320 residues: Malate dehydrogenase (320 aa).

NAD(+)-binding positions include 10–15 (GAGQIG) and aspartate 34. The substrate site is built by arginine 83 and arginine 89. NAD(+) is bound by residues asparagine 96 and 119-121 (ITN). Residues asparagine 121 and arginine 152 each contribute to the substrate site. Catalysis depends on histidine 176, which acts as the Proton acceptor.

Belongs to the LDH/MDH superfamily. MDH type 3 family.

The catalysed reaction is (S)-malate + NAD(+) = oxaloacetate + NADH + H(+). Catalyzes the reversible oxidation of malate to oxaloacetate. The polypeptide is Malate dehydrogenase (Methylobacterium radiotolerans (strain ATCC 27329 / DSM 1819 / JCM 2831 / NBRC 15690 / NCIMB 10815 / 0-1)).